We begin with the raw amino-acid sequence, 279 residues long: MQKYLEKANVLIEALPYIRKFNSKIILIKYGGSAMENEELKHCVMQDIALLKLVGLKPIIVHGGGKDISAMCEKLGVKSEFKNGLRVSDKATTEVASMVLNHINKNLVHSLQNLGVKAIGLCGKDGALLECVKKDENLAFVGTIQKVNSKILEELLEKDFLPIIAPIGMDEDFNTYNINADDAACAIAKALRAEKLAFLTDTAGLYEDFNDKNSLISKISLEQAKILAPKIEGGMHVKLKSCIDACENGVKKVHILDGRVKHSLLLEFFTDEGIGTLVG.

Substrate contacts are provided by residues 64-65 (GG), Arg-86, and Asn-177.

The protein belongs to the acetylglutamate kinase family. ArgB subfamily.

It is found in the cytoplasm. The enzyme catalyses N-acetyl-L-glutamate + ATP = N-acetyl-L-glutamyl 5-phosphate + ADP. Its pathway is amino-acid biosynthesis; L-arginine biosynthesis; N(2)-acetyl-L-ornithine from L-glutamate: step 2/4. In terms of biological role, catalyzes the ATP-dependent phosphorylation of N-acetyl-L-glutamate. The chain is Acetylglutamate kinase from Campylobacter jejuni subsp. doylei (strain ATCC BAA-1458 / RM4099 / 269.97).